Reading from the N-terminus, the 91-residue chain is MSLNSAEKAEIINEYKRGDKDTGSPEVQVSLITSRIKYLTDHFKENKKDFHSRRGLQELVNKRRKLLKYLKRNDQDRYQTLIQNLGLRDSY.

The protein belongs to the universal ribosomal protein uS15 family. As to quaternary structure, part of the 30S ribosomal subunit. Forms a bridge to the 50S subunit in the 70S ribosome, contacting the 23S rRNA.

Functionally, one of the primary rRNA binding proteins, it binds directly to 16S rRNA where it helps nucleate assembly of the platform of the 30S subunit by binding and bridging several RNA helices of the 16S rRNA. Forms an intersubunit bridge (bridge B4) with the 23S rRNA of the 50S subunit in the ribosome. This Legionella pneumophila (strain Corby) protein is Small ribosomal subunit protein uS15.